A 1596-amino-acid polypeptide reads, in one-letter code: SET-binding protein (1596 aa).

Polar residues predominate over residues 1-12; that stretch reads MESRETLSSSRQ. Disordered stretches follow at residues 1–83, 134–426, and 475–518; these read MESR…WVAG, KQSG…SIKA, and SPSV…SRKL. The segment covering 64-81 has biased composition (basic and acidic residues); sequence GSGRDVDSNSNADSEKWV. The segment covering 164–175 has biased composition (low complexity); that stretch reads LTASDLAASDLK. 2 stretches are compositionally biased toward polar residues: residues 213-236 and 270-282; these read KSSS…QNCF and AGNT…NNNK. A compositionally biased stretch (low complexity) spans 290–306; it reads APSPSSHSSPAPPSSSA. Basic and acidic residues predominate over residues 363–372; the sequence is DNTEGKREGY. A compositionally biased stretch (polar residues) spans 375–395; it reads DSAQEASPARQNVSSASNPEN. The segment at residues 584–596 is a DNA-binding region (a.T hook 1); sequence KKKRGRPKKQPLL. 3 disordered regions span residues 604–624, 722–763, and 777–796; these read GTST…KKRK, YIGK…AVPS, and HPLS…ASTE. Residues 779-796 show a composition bias toward polar residues; sequence LSTQLGGSNGNLSPASTE. K817 is subject to N6-acetyllysine. Over residues 854–880 the composition is skewed to polar residues; it reads SPVSESHSEETIPSDSGIGTDNNSTSD. A disordered region spans residues 854–889; the sequence is SPVSESHSEETIPSDSGIGTDNNSTSDQAEKSSESR. Residues 1016-1028 constitute a DNA-binding region (a.T hook 2); the sequence is KKKRGRPAKTNDT. 6 disordered regions span residues 1134–1164, 1202–1225, 1245–1300, 1325–1344, 1440–1473, and 1518–1596; these read PPKV…DRIL, EKNK…SKNN, AKEK…GSKR, SSYD…KVDQ, QRQS…DQMP, and EAPP…EVLP. Basic residues predominate over residues 1146–1159; that stretch reads RLHKRKHKHKHKHK. Positions 1450–1459 are enriched in basic residues; that stretch reads VKKRRGRPRK. Positions 1451–1463 form a DNA-binding region, a.T hook 3; sequence KKRRGRPRKQPTQ. Tandem repeats lie at residues 1520 to 1527, 1528 to 1535, and 1536 to 1543. A 3 X 8 AA tandem repeats of P-P-L-P-P-P-P-P region spans residues 1520–1543; that stretch reads PPLPPPPPPPLPPPPPPPLPPPPP. Pro residues-rich tracts occupy residues 1520–1546 and 1560–1572; these read PPLP…PLPK and PAQP…PQQP.

As to quaternary structure, interacts with SET. As to expression, expressed in numerous tissues. Expressed at low levels in myeloid and monocytic cells as well as in CD34+ cells; expression levels are higher in myeloid malignancies.

It is found in the nucleus. The protein is SET-binding protein (SETBP1) of Homo sapiens (Human).